A 322-amino-acid polypeptide reads, in one-letter code: Deoxyhypusine hydroxylase (322 aa).

His-78, Glu-79, His-111, and Glu-112 together coordinate Fe cation. 4 HEAT-like PBS-type repeats span residues 109 to 135, 203 to 229, 234 to 260, and 267 to 293; these read VRHEAAEALGALGDKDSLEDLEKCLKN, LRYRAMFRLRDIGTDEAVLALASGFND, FKHEIAYVFGQMGSTAAVPSLTEVLGR, and VRHEAAEALGAIASEDALPILKQYLND. 4 residues coordinate Fe cation: His-236, Glu-237, His-269, and Glu-270.

This sequence belongs to the deoxyhypusine hydroxylase family. The cofactor is Fe(2+).

The protein resides in the cytoplasm. It is found in the nucleus. It catalyses the reaction [eIF5A protein]-deoxyhypusine + AH2 + O2 = [eIF5A protein]-hypusine + A + H2O. It participates in protein modification; eIF5A hypusination. Its function is as follows. Catalyzes the hydroxylation of the N(6)-(4-aminobutyl)-L-lysine intermediate to form hypusine, an essential post-translational modification only found in mature eIF-5A factor. The protein is Deoxyhypusine hydroxylase of Candida glabrata (strain ATCC 2001 / BCRC 20586 / JCM 3761 / NBRC 0622 / NRRL Y-65 / CBS 138) (Yeast).